Consider the following 207-residue polypeptide: N-(5'-phosphoribosyl)anthranilate isomerase (207 aa).

This sequence belongs to the TrpF family.

It catalyses the reaction N-(5-phospho-beta-D-ribosyl)anthranilate = 1-(2-carboxyphenylamino)-1-deoxy-D-ribulose 5-phosphate. It functions in the pathway amino-acid biosynthesis; L-tryptophan biosynthesis; L-tryptophan from chorismate: step 3/5. The polypeptide is N-(5'-phosphoribosyl)anthranilate isomerase (Petrotoga mobilis (strain DSM 10674 / SJ95)).